A 208-amino-acid polypeptide reads, in one-letter code: Peroxiredoxin (208 aa).

Positions 2–156 constitute a Thioredoxin domain; it reads PLLGDDFPQL…IVRAVKALQT (155 aa). The active-site Cysteine sulfenic acid (-SOH) intermediate is the Cys-44. Arg-119 provides a ligand contact to substrate.

The protein belongs to the peroxiredoxin family. Prx6 subfamily. As to quaternary structure, homodecamer. Pentamer of dimers that assemble into a ring structure.

It localises to the cytoplasm. The enzyme catalyses a hydroperoxide + [thioredoxin]-dithiol = an alcohol + [thioredoxin]-disulfide + H2O. Functionally, thiol-specific peroxidase that catalyzes the reduction of hydrogen peroxide and organic hydroperoxides to water and alcohols, respectively. Plays a role in cell protection against oxidative stress by detoxifying peroxides. The polypeptide is Peroxiredoxin (Treponema denticola (strain ATCC 35405 / DSM 14222 / CIP 103919 / JCM 8153 / KCTC 15104)).